The sequence spans 103 residues: MYAVIVTGGKQYKVAEGEYLKIEKLEVATGESVTFDRVLLVANGDDVNIGAPVVAGATVKAEVISQGRHDKVRIIKFRRRKHHMKRMGHRQWFTEIKITGIQA.

It belongs to the bacterial ribosomal protein bL21 family. In terms of assembly, part of the 50S ribosomal subunit. Contacts protein L20.

Functionally, this protein binds to 23S rRNA in the presence of protein L20. This is Large ribosomal subunit protein bL21 from Pseudomonas fluorescens (strain Pf0-1).